The primary structure comprises 488 residues: Ribulose bisphosphate carboxylase large chain (488 aa).

Asn-127 and Thr-177 together coordinate substrate. The active-site Proton acceptor is the Lys-179. Lys-181 contributes to the substrate binding site. Residues Lys-205, Asp-207, and Glu-208 each contribute to the Mg(2+) site. Lys-205 is modified (N6-carboxylysine). Residue His-297 is the Proton acceptor of the active site. Substrate-binding residues include Arg-298, His-330, and Ser-382.

It belongs to the RuBisCO large chain family. Type I subfamily. In terms of assembly, heterohexadecamer of 8 large chains and 8 small chains. Mg(2+) is required as a cofactor.

It localises to the plastid. The protein localises to the chloroplast. The enzyme catalyses 2 (2R)-3-phosphoglycerate + 2 H(+) = D-ribulose 1,5-bisphosphate + CO2 + H2O. The catalysed reaction is D-ribulose 1,5-bisphosphate + O2 = 2-phosphoglycolate + (2R)-3-phosphoglycerate + 2 H(+). Its function is as follows. RuBisCO catalyzes two reactions: the carboxylation of D-ribulose 1,5-bisphosphate, the primary event in carbon dioxide fixation, as well as the oxidative fragmentation of the pentose substrate in the photorespiration process. Both reactions occur simultaneously and in competition at the same active site. This chain is Ribulose bisphosphate carboxylase large chain, found in Chrysotila carterae (Marine alga).